The following is an 898-amino-acid chain: DNA mismatch repair protein MutS (898 aa).

Residue 646–653 (GPNMGGKS) coordinates ATP.

It belongs to the DNA mismatch repair MutS family.

Its function is as follows. This protein is involved in the repair of mismatches in DNA. It is possible that it carries out the mismatch recognition step. This protein has a weak ATPase activity. This is DNA mismatch repair protein MutS from Brucella ovis (strain ATCC 25840 / 63/290 / NCTC 10512).